The following is a 398-amino-acid chain: Putative defective protein IntQ (398 aa).

Residues 51-146 form the Core-binding (CB) domain; that stretch reads LTIKELAEKF…NLNAVFQFGV (96 aa). Residues 167-378 enclose the Tyr recombinase domain; sequence TIPDPLSREE…SENNNAQVAL (212 aa). Catalysis depends on residues R202, K236, R331, and H354. Catalysis depends on Y364, which acts as the O-(3'-phospho-DNA)-tyrosine intermediate.

Belongs to the 'phage' integrase family.

Its function is as follows. Integrase is necessary for integration of the phage into the host genome by site-specific recombination. In conjunction with excisionase, integrase is also necessary for excision of the prophage from the host genome. This chain is Putative defective protein IntQ (intQ), found in Escherichia coli (strain K12).